A 226-amino-acid polypeptide reads, in one-letter code: ATP synthase F(0) complex subunit a (226 aa).

Helical transmembrane passes span 11 to 31 (APTI…TLLI), 68 to 88 (WSLM…LGLL), 97 to 117 (QLSM…ITGL), 138 to 158 (IPML…ALAV), 164 to 184 (ITAG…LSTI), and 194 to 214 (VLLM…AYVF).

It belongs to the ATPase A chain family. Component of the ATP synthase complex composed at least of ATP5F1A/subunit alpha, ATP5F1B/subunit beta, ATP5MC1/subunit c (homooctomer), MT-ATP6/subunit a, MT-ATP8/subunit 8, ATP5ME/subunit e, ATP5MF/subunit f, ATP5MG/subunit g, ATP5MK/subunit k, ATP5MJ/subunit j, ATP5F1C/subunit gamma, ATP5F1D/subunit delta, ATP5F1E/subunit epsilon, ATP5PF/subunit F6, ATP5PB/subunit b, ATP5PD/subunit d, ATP5PO/subunit OSCP. ATP synthase complex consists of a soluble F(1) head domain (subunits alpha(3) and beta(3)) - the catalytic core - and a membrane F(0) domain - the membrane proton channel (subunits c, a, 8, e, f, g, k and j). These two domains are linked by a central stalk (subunits gamma, delta, and epsilon) rotating inside the F1 region and a stationary peripheral stalk (subunits F6, b, d, and OSCP). Interacts with DNAJC30; interaction is direct.

Its subcellular location is the mitochondrion inner membrane. It catalyses the reaction H(+)(in) = H(+)(out). Functionally, subunit a, of the mitochondrial membrane ATP synthase complex (F(1)F(0) ATP synthase or Complex V) that produces ATP from ADP in the presence of a proton gradient across the membrane which is generated by electron transport complexes of the respiratory chain. ATP synthase complex consist of a soluble F(1) head domain - the catalytic core - and a membrane F(1) domain - the membrane proton channel. These two domains are linked by a central stalk rotating inside the F(1) region and a stationary peripheral stalk. During catalysis, ATP synthesis in the catalytic domain of F(1) is coupled via a rotary mechanism of the central stalk subunits to proton translocation. With the subunit c (ATP5MC1), forms the proton-conducting channel in the F(0) domain, that contains two crucial half-channels (inlet and outlet) that facilitate proton movement from the mitochondrial intermembrane space (IMS) into the matrix. Protons are taken up via the inlet half-channel and released through the outlet half-channel, following a Grotthuss mechanism. The chain is ATP synthase F(0) complex subunit a from Papio hamadryas (Hamadryas baboon).